Here is a 348-residue protein sequence, read N- to C-terminus: Fructose-1,6-bisphosphatase class 1 (348 aa).

Residues E107, D129, I131, and D132 each contribute to the Mg(2+) site. Residues 132–135 (DGSS), N224, Y252, and K282 contribute to the substrate site. Residue E288 coordinates Mg(2+).

This sequence belongs to the FBPase class 1 family. In terms of assembly, homotetramer. It depends on Mg(2+) as a cofactor.

Its subcellular location is the cytoplasm. It carries out the reaction beta-D-fructose 1,6-bisphosphate + H2O = beta-D-fructose 6-phosphate + phosphate. It participates in carbohydrate biosynthesis; Calvin cycle. This Microcystis aeruginosa (strain NIES-843 / IAM M-2473) protein is Fructose-1,6-bisphosphatase class 1.